The following is a 301-amino-acid chain: uncharacterized protein (301 aa).

Residues 1-26 (MKGFSCSRPGYLTGLLLLAVAPILTA) form the signal peptide. Residue cysteine 27 is the site of N-palmitoyl cysteine attachment. Residue cysteine 27 is the site of S-diacylglycerol cysteine attachment. One can recognise a TNase-like domain in the interval 46 to 243 (KLKPATIEYW…YNAKINIWSH (198 aa)). Residues 64–136 (NYASEERRKE…SKGDSTGDEK (73 aa)) are disordered. 2 stretches are compositionally biased toward basic and acidic residues: residues 67–95 (SEER…KTED) and 120–136 (TPEK…GDEK).

The protein localises to the cell membrane. This is an uncharacterized protein from Mycoplasma pneumoniae (strain ATCC 29342 / M129 / Subtype 1) (Mycoplasmoides pneumoniae).